The primary structure comprises 210 residues: Guanylate kinase (210 aa).

The 180-residue stretch at 5–184 folds into the Guanylate kinase-like domain; that stretch reads GLLIVFSGPS…AAERVKHIIE (180 aa). Residue 12–19 participates in ATP binding; sequence GPSGVGKG.

This sequence belongs to the guanylate kinase family.

Its subcellular location is the cytoplasm. It carries out the reaction GMP + ATP = GDP + ADP. In terms of biological role, essential for recycling GMP and indirectly, cGMP. This chain is Guanylate kinase, found in Streptococcus mutans serotype c (strain ATCC 700610 / UA159).